The following is a 483-amino-acid chain: Cobyric acid synthase (483 aa).

The GATase cobBQ-type domain occupies 251–438 (SLVVAVPMLP…LHGVFNADEF (188 aa)). The Nucleophile role is filled by Cys-333. The active site involves His-430.

Belongs to the CobB/CobQ family. CobQ subfamily.

Its pathway is cofactor biosynthesis; adenosylcobalamin biosynthesis. Its function is as follows. Catalyzes amidations at positions B, D, E, and G on adenosylcobyrinic A,C-diamide. NH(2) groups are provided by glutamine, and one molecule of ATP is hydrogenolyzed for each amidation. This is Cobyric acid synthase from Brucella anthropi (strain ATCC 49188 / DSM 6882 / CCUG 24695 / JCM 21032 / LMG 3331 / NBRC 15819 / NCTC 12168 / Alc 37) (Ochrobactrum anthropi).